The sequence spans 324 residues: Protein translocase subunit SecF (324 aa).

A run of 6 helical transmembrane segments spans residues 16-36 (FFWAAPVTFGFSVFLMAASLV), 145-165 (LIRSAILAVAAACAGIAVYIW), 174-194 (LGSVAALIHDVLVTIGVFALF), 201-221 (TTVAALLTVLGYSINDTVVVF), 247-269 (TLSRTIMTLMTTLIALVSLLVFG), and 276-295 (FVFAITFGVVIGTYSSVYMA).

It belongs to the SecD/SecF family. SecF subfamily. As to quaternary structure, forms a complex with SecD. Part of the essential Sec protein translocation apparatus which comprises SecA, SecYEG and auxiliary proteins SecDF-YajC and YidC.

The protein localises to the cell inner membrane. Its function is as follows. Part of the Sec protein translocase complex. Interacts with the SecYEG preprotein conducting channel. SecDF uses the proton motive force (PMF) to complete protein translocation after the ATP-dependent function of SecA. The sequence is that of Protein translocase subunit SecF from Cereibacter sphaeroides (strain ATCC 17023 / DSM 158 / JCM 6121 / CCUG 31486 / LMG 2827 / NBRC 12203 / NCIMB 8253 / ATH 2.4.1.) (Rhodobacter sphaeroides).